The chain runs to 202 residues: Elongation factor Ts, chloroplastic (202 aa).

This sequence belongs to the EF-Ts family.

It is found in the plastid. The protein resides in the chloroplast. In terms of biological role, associates with the EF-Tu.GDP complex and induces the exchange of GDP to GTP. It remains bound to the aminoacyl-tRNA.EF-Tu.GTP complex up to the GTP hydrolysis stage on the ribosome. The polypeptide is Elongation factor Ts, chloroplastic (tsf) (Phaeodactylum tricornutum (strain CCAP 1055/1)).